Consider the following 97-residue polypeptide: uncharacterized protein (97 aa).

Residues serine 58–serine 97 are disordered.

This is an uncharacterized protein from Homo sapiens (Human).